The following is a 267-amino-acid chain: MRVLVNISYQGSQFLGFQIQQHGRTIQQQFEKILKRMHKHEVRIHPSSRTDRGVHAIEQYFHFDTELNIPEQQWQYAMNRALPDDIYVNDVSFVNDDFHCRYDCVGKSYRYKIYQSAHKDPFLCGLKTYVPEQLDIEKMNMAAQHFIGTHDFTGFCSQKTEVESKIRTLYESRIEKTESGFDYIVTGSGFLYNMVRVLIAFLIEVGKGKREPQEVPQLLEARDRNQVPFTAPAEGLYLEKIYLTPNELIQDFGNNIKIHQKKSSQNL.

The active-site Nucleophile is Asp-51. A substrate-binding site is contributed by Tyr-109.

It belongs to the tRNA pseudouridine synthase TruA family. As to quaternary structure, homodimer.

It carries out the reaction uridine(38/39/40) in tRNA = pseudouridine(38/39/40) in tRNA. Formation of pseudouridine at positions 38, 39 and 40 in the anticodon stem and loop of transfer RNAs. This chain is tRNA pseudouridine synthase A, found in Staphylococcus saprophyticus subsp. saprophyticus (strain ATCC 15305 / DSM 20229 / NCIMB 8711 / NCTC 7292 / S-41).